A 708-amino-acid chain; its full sequence is Vertnin (708 aa).

Disordered stretches follow at residues 473 to 499 (PWKG…FLPP) and 561 to 636 (APAL…PVAE). Residues 568 to 582 (GLREAKEKQEKEAGR) are compositionally biased toward basic and acidic residues.

This sequence belongs to the vertnin family.

This chain is Vertnin (VRTN), found in Ailuropoda melanoleuca (Giant panda).